The sequence spans 97 residues: Co-chaperonin GroES (97 aa).

The protein belongs to the GroES chaperonin family. As to quaternary structure, heptamer of 7 subunits arranged in a ring. Interacts with the chaperonin GroEL.

It localises to the cytoplasm. In terms of biological role, together with the chaperonin GroEL, plays an essential role in assisting protein folding. The GroEL-GroES system forms a nano-cage that allows encapsulation of the non-native substrate proteins and provides a physical environment optimized to promote and accelerate protein folding. GroES binds to the apical surface of the GroEL ring, thereby capping the opening of the GroEL channel. The protein is Co-chaperonin GroES of Pectobacterium atrosepticum (strain SCRI 1043 / ATCC BAA-672) (Erwinia carotovora subsp. atroseptica).